Consider the following 199-residue polypeptide: Fe/S biogenesis protein NfuA (199 aa).

2 residues coordinate [4Fe-4S] cluster: Cys-151 and Cys-154.

Belongs to the NfuA family. As to quaternary structure, homodimer. [4Fe-4S] cluster serves as cofactor.

Its function is as follows. Involved in iron-sulfur cluster biogenesis. Binds a 4Fe-4S cluster, can transfer this cluster to apoproteins, and thereby intervenes in the maturation of Fe/S proteins. Could also act as a scaffold/chaperone for damaged Fe/S proteins. The sequence is that of Fe/S biogenesis protein NfuA from Xanthomonas axonopodis pv. citri (strain 306).